A 552-amino-acid chain; its full sequence is CTP synthase (552 aa).

The segment at 1-267 (MAKFIFVTGG…AEQTLKLLRM (267 aa)) is amidoligase domain. Ser-13 contacts CTP. Residue Ser-13 participates in UTP binding. ATP contacts are provided by residues 14-19 (SIGKGI) and Asp-71. Mg(2+) contacts are provided by Asp-71 and Glu-141. CTP-binding positions include 148–150 (DIE), 188–193 (KTKPTQ), and Lys-224. UTP-binding positions include 188-193 (KTKPTQ) and Lys-224. In terms of domain architecture, Glutamine amidotransferase type-1 spans 292-534 (DIAIVGKYVQ…IQAAGNHKSQ (243 aa)). Gly-354 is a binding site for L-glutamine. Cys-381 functions as the Nucleophile; for glutamine hydrolysis in the catalytic mechanism. L-glutamine-binding positions include 382 to 385 (LGMQ), Glu-405, and Arg-462. Residues His-507 and Glu-509 contribute to the active site. A disordered region spans residues 533–552 (SQPISDELDNQSTEMSISLS).

It belongs to the CTP synthase family. In terms of assembly, homotetramer.

The catalysed reaction is UTP + L-glutamine + ATP + H2O = CTP + L-glutamate + ADP + phosphate + 2 H(+). It carries out the reaction L-glutamine + H2O = L-glutamate + NH4(+). The enzyme catalyses UTP + NH4(+) + ATP = CTP + ADP + phosphate + 2 H(+). Its pathway is pyrimidine metabolism; CTP biosynthesis via de novo pathway; CTP from UDP: step 2/2. Allosterically activated by GTP, when glutamine is the substrate; GTP has no effect on the reaction when ammonia is the substrate. The allosteric effector GTP functions by stabilizing the protein conformation that binds the tetrahedral intermediate(s) formed during glutamine hydrolysis. Inhibited by the product CTP, via allosteric rather than competitive inhibition. Its function is as follows. Catalyzes the ATP-dependent amination of UTP to CTP with either L-glutamine or ammonia as the source of nitrogen. Regulates intracellular CTP levels through interactions with the four ribonucleotide triphosphates. This Picosynechococcus sp. (strain ATCC 27264 / PCC 7002 / PR-6) (Agmenellum quadruplicatum) protein is CTP synthase.